A 94-amino-acid chain; its full sequence is DNA-directed RNA polymerase subunit omega (94 aa).

It belongs to the RNA polymerase subunit omega family. In terms of assembly, the RNAP catalytic core consists of 2 alpha, 1 beta, 1 beta' and 1 omega subunit. When a sigma factor is associated with the core the holoenzyme is formed, which can initiate transcription.

The catalysed reaction is RNA(n) + a ribonucleoside 5'-triphosphate = RNA(n+1) + diphosphate. Functionally, promotes RNA polymerase assembly. Latches the N- and C-terminal regions of the beta' subunit thereby facilitating its interaction with the beta and alpha subunits. In Shewanella pealeana (strain ATCC 700345 / ANG-SQ1), this protein is DNA-directed RNA polymerase subunit omega.